A 252-amino-acid polypeptide reads, in one-letter code: Isoprenyl transferase (252 aa).

Residue D32 is part of the active site. D32 serves as a coordination point for Mg(2+). Substrate-binding positions include 33–36 (GNGR), W37, R45, H49, and 77–79 (STE). The Proton acceptor role is filled by N80. Substrate contacts are provided by residues W81, R83, R200, and 206–208 (RLS). E219 lines the Mg(2+) pocket.

The protein belongs to the UPP synthase family. Homodimer. Mg(2+) serves as cofactor.

In terms of biological role, catalyzes the condensation of isopentenyl diphosphate (IPP) with allylic pyrophosphates generating different type of terpenoids. This chain is Isoprenyl transferase, found in Listeria monocytogenes serovar 1/2a (strain ATCC BAA-679 / EGD-e).